The chain runs to 578 residues: CTP synthase 2 (578 aa).

The Glutamine amidotransferase type-1 domain maps to 300–553 (SIALVGKYTK…MLAASGKLNT (254 aa)). Residues C399, H526, and E528 each act as for GATase activity in the active site.

The protein belongs to the CTP synthase family.

The catalysed reaction is UTP + L-glutamine + ATP + H2O = CTP + L-glutamate + ADP + phosphate + 2 H(+). Its pathway is pyrimidine metabolism; CTP biosynthesis via de novo pathway; CTP from UDP: step 2/2. Functionally, catalyzes the ATP-dependent amination of UTP to CTP with either L-glutamine or ammonia as the source of nitrogen. Constitutes the rate-limiting enzyme in the synthesis of cytosine nucleotides. In Xenopus laevis (African clawed frog), this protein is CTP synthase 2 (ctps2).